The sequence spans 244 residues: Tubulin-folding cofactor B (244 aa).

At Met1 the chain carries N-acetylmethionine. A Phosphoserine; by PAK1 modification is found at Ser65. Tyr98 is subject to Phosphotyrosine. Ser110 is subject to Phosphoserine. A Phosphoserine; by PAK1 modification is found at Ser128. The CAP-Gly domain maps to 183 to 225 (GLTDFKPGYWVGVRYDEPLGKNDGSVNGKRYFECQAKYGAFVK). An N6-acetyllysine modification is found at Lys219.

This sequence belongs to the TBCB family. Supercomplex made of cofactors A to E. Cofactors A and D function by capturing and stabilizing tubulin in a quasi-native conformation. Cofactor E binds to the cofactor D-tubulin complex; interaction with cofactor C then causes the release of tubulin polypeptides that are committed to the native state. Cofactors B and E can form a heterodimer which binds to alpha-tubulin and enhances their ability to dissociate tubulin heterodimers. Interacts with GAN. Interacts with DCTN1. Post-translationally, phosphorylation by PAK1 is required for normal function. In terms of processing, ubiquitinated in the presence of GAN which targets it for degradation by the proteasome. Widely expressed with highest levels in brain. Broadly distributed throughout the neonate brain but restricted mainly to ependymary cells in the adult brain where it is concentrated in the cilia.

The protein resides in the cytoplasm. The protein localises to the cytoskeleton. In terms of biological role, binds to alpha-tubulin folding intermediates after their interaction with cytosolic chaperonin in the pathway leading from newly synthesized tubulin to properly folded heterodimer. Involved in regulation of tubulin heterodimer dissociation. May function as a negative regulator of axonal growth. The sequence is that of Tubulin-folding cofactor B (Tbcb) from Mus musculus (Mouse).